The following is a 576-amino-acid chain: Glutamine--tRNA ligase (576 aa).

The short motif at 47–57 is the 'HIGH' region element; that stretch reads PEPNGYLHIGH. ATP is bound by residues 48 to 50 and 54 to 60; these read EPN and HIGHAKS. L-glutamine contacts are provided by Asp80 and Tyr229. Residues Thr248 and 283-284 contribute to the ATP site; that span reads RL. Residues 290 to 294 carry the 'KMSKS' region motif; that stretch reads ITSKR.

The protein belongs to the class-I aminoacyl-tRNA synthetase family. In terms of assembly, monomer.

The protein resides in the cytoplasm. The catalysed reaction is tRNA(Gln) + L-glutamine + ATP = L-glutaminyl-tRNA(Gln) + AMP + diphosphate. This chain is Glutamine--tRNA ligase, found in Ralstonia pickettii (strain 12J).